A 307-amino-acid chain; its full sequence is tRNA dimethylallyltransferase (307 aa).

8–15 (GPTGSGKS) contacts ATP. 10 to 15 (TGSGKS) lines the substrate pocket. The interval 33 to 36 (DSLQ) is interaction with substrate tRNA.

It belongs to the IPP transferase family. As to quaternary structure, monomer. Mg(2+) is required as a cofactor.

The catalysed reaction is adenosine(37) in tRNA + dimethylallyl diphosphate = N(6)-dimethylallyladenosine(37) in tRNA + diphosphate. Its function is as follows. Catalyzes the transfer of a dimethylallyl group onto the adenine at position 37 in tRNAs that read codons beginning with uridine, leading to the formation of N6-(dimethylallyl)adenosine (i(6)A). The polypeptide is tRNA dimethylallyltransferase (Solibacter usitatus (strain Ellin6076)).